The following is a 190-amino-acid chain: Potassium-transporting ATPase KdpC subunit (190 aa).

The chain crosses the membrane as a helical span at residues 10–30 (TFLFLLLITGGVYPLLTTALG).

This sequence belongs to the KdpC family. In terms of assembly, the system is composed of three essential subunits: KdpA, KdpB and KdpC.

The protein localises to the cell inner membrane. Part of the high-affinity ATP-driven potassium transport (or Kdp) system, which catalyzes the hydrolysis of ATP coupled with the electrogenic transport of potassium into the cytoplasm. This subunit acts as a catalytic chaperone that increases the ATP-binding affinity of the ATP-hydrolyzing subunit KdpB by the formation of a transient KdpB/KdpC/ATP ternary complex. The chain is Potassium-transporting ATPase KdpC subunit from Escherichia coli O81 (strain ED1a).